Reading from the N-terminus, the 367-residue chain is GTP cyclohydrolase FolE2 (367 aa).

The protein belongs to the GTP cyclohydrolase IV family.

It catalyses the reaction GTP + H2O = 7,8-dihydroneopterin 3'-triphosphate + formate + H(+). It participates in cofactor biosynthesis; 7,8-dihydroneopterin triphosphate biosynthesis; 7,8-dihydroneopterin triphosphate from GTP: step 1/1. Functionally, converts GTP to 7,8-dihydroneopterin triphosphate. In Roseobacter denitrificans (strain ATCC 33942 / OCh 114) (Erythrobacter sp. (strain OCh 114)), this protein is GTP cyclohydrolase FolE2.